The chain runs to 549 residues: Probable protein kinase UbiB (549 aa).

Residues 123-504 (DFDETALASA…QRNNTGFSRL (382 aa)) enclose the Protein kinase domain. ATP is bound by residues 129 to 137 (LASASIAQV) and lysine 156. Aspartate 291 functions as the Proton acceptor in the catalytic mechanism. The chain crosses the membrane as a helical span at residues 505 to 525 (MILGIAIAGTFWKFEMLPLWV).

This sequence belongs to the ABC1 family. UbiB subfamily.

It is found in the cell inner membrane. It functions in the pathway cofactor biosynthesis; ubiquinone biosynthesis [regulation]. In terms of biological role, is probably a protein kinase regulator of UbiI activity which is involved in aerobic coenzyme Q (ubiquinone) biosynthesis. In Glaesserella parasuis serovar 5 (strain SH0165) (Haemophilus parasuis), this protein is Probable protein kinase UbiB.